Reading from the N-terminus, the 345-residue chain is MDENKKRALAAALGQIEKQFGKGSVMRMGDRVVEPVEAIPTGSLMLDIALGIGGLPKGRVVEIYGPESSGKTTLTLQAIAECQKMGGTAAFIDAEHALDPIYAAKLGVNVDDLLLSQPDTGEQALEIADMLVRSGSVDILVIDSVAALTPKAEIEGEMGDQLPGLQARLMSQALRKLTGNIKRSNTLVIFINQLRMKIGVMMPGQSPETTTGGNALKFYASVRLDIRRIGAIKKGDEIIGNQTKIKVVKNKLAPPFKQVITEILYGEGISREGELIDMGVDAKLVEKAGAWYSYGEERIGQGKDNARGYLRDNPTVAAKLEAELREKFQPAEAAREEGDDEGEDE.

65-72 (GPESSGKT) contacts ATP. Basic and acidic residues predominate over residues 326–336 (EKFQPAEAARE). Residues 326 to 345 (EKFQPAEAAREEGDDEGEDE) are disordered.

Belongs to the RecA family.

It is found in the cytoplasm. Can catalyze the hydrolysis of ATP in the presence of single-stranded DNA, the ATP-dependent uptake of single-stranded DNA by duplex DNA, and the ATP-dependent hybridization of homologous single-stranded DNAs. It interacts with LexA causing its activation and leading to its autocatalytic cleavage. The sequence is that of Protein RecA from Stenotrophomonas maltophilia (strain K279a).